A 225-amino-acid chain; its full sequence is Nucleolar protein 6 (225 aa).

The interval 1-75 is disordered; the sequence is MGSEEDKKLT…GGKGKNGKKG (75 aa). Basic residues predominate over residues 9-20; sequence LTKKQLKAQQFR. The segment covering 21–42 has biased composition (basic and acidic residues); the sequence is KSKEEKDQEKDVKKEQAPEGKR. A Phosphoserine modification is found at Ser-45. The span at 56–75 shows a compositional bias: basic residues; the sequence is KKKRKTRRGRGGKGKNGKKG. The RRM domain occupies 78-155; sequence FIVFVGSLPR…KKINVELTVG (78 aa). Ser-160 bears the Phosphoserine mark. Residues 187–225 form a disordered region; sequence NDGNQKKIAKTTATAAQTSGTDNKPVPAGIHPDRAKLLK.

This sequence belongs to the RRM NOP6 family.

The protein localises to the nucleus. It is found in the nucleolus. Functionally, predicted to be involved in rRNA processing. This chain is Nucleolar protein 6 (NOP6), found in Saccharomyces cerevisiae (strain ATCC 204508 / S288c) (Baker's yeast).